The following is a 368-amino-acid chain: tRNA-specific 2-thiouridylase MnmA (368 aa).

ATP contacts are provided by residues 12-19 and Met38; that span reads GMSGGVDS. The interval 98–100 is interaction with target base in tRNA; sequence NPD. Catalysis depends on Cys103, which acts as the Nucleophile. An intrachain disulfide couples Cys103 to Cys200. Residue Gly128 coordinates ATP. Positions 150 to 152 are interaction with tRNA; the sequence is KDQ. Cys200 serves as the catalytic Cysteine persulfide intermediate. The interval 311–312 is interaction with tRNA; sequence RY.

Belongs to the MnmA/TRMU family.

It localises to the cytoplasm. It carries out the reaction S-sulfanyl-L-cysteinyl-[protein] + uridine(34) in tRNA + AH2 + ATP = 2-thiouridine(34) in tRNA + L-cysteinyl-[protein] + A + AMP + diphosphate + H(+). Catalyzes the 2-thiolation of uridine at the wobble position (U34) of tRNA, leading to the formation of s(2)U34. This is tRNA-specific 2-thiouridylase MnmA from Aeromonas salmonicida (strain A449).